The sequence spans 1421 residues: ALK tyrosine kinase receptor homolog scd-2 (1421 aa).

A signal peptide spans 1-20 (MRKRRLWWFVVLFRVTLVGA). Residues 21-903 (ILPNETFDVR…DTCEEIQIWT (883 aa)) are Extracellular-facing. N24, N44, N70, N83, N119, and N201 each carry an N-linked (GlcNAc...) asparagine glycan. The LDL-receptor class A domain maps to 300–338 (QCSRGDQFLCSISANTRCLQNAQCDSRIDCDDESDEMDC). 3 disulfides stabilise this stretch: C301/C317, C309/C329, and C323/C338. An MAM domain is found at 339-542 (GNINGTMCDF…NLSFSPTCFE (204 aa)). N342, N362, N495, N533, N546, N633, N726, N793, N849, N873, and N893 each carry an N-linked (GlcNAc...) asparagine glycan. The helical transmembrane segment at 904–924 (LYNITFLIFAALTIIGALFVV) threads the bilayer. At 925–1421 (YHYRNREKQM…SVPLLECQTR (497 aa)) the chain is on the cytoplasmic side. The region spanning 976-1261 (IERGRVLGRG…GMPFPIHPAV (286 aa)) is the Protein kinase domain. Residues 982–990 (LGRGNFGEV) and K1003 each bind ATP. The active-site Proton acceptor is D1106.

Belongs to the protein kinase superfamily. Tyr protein kinase family. Insulin receptor subfamily. As to quaternary structure, interacts (via cytoplasmic domain) with fsn-1 (via SPRY domain). Expressed in AIA sensory neurons.

Its subcellular location is the cell membrane. The enzyme catalyses L-tyrosyl-[protein] + ATP = O-phospho-L-tyrosyl-[protein] + ADP + H(+). Probable tyrosine-protein kinase receptor which regulates the dauer/non-dauer developmental decision probably by controlling daf-3 transcriptional activity in parallel or together with the TGF-beta pathway. Regulates integration of conflicting sensory cues in AIA interneurons. May act as a receptor for hen-1. In AWA neurons, together with hen-1, plays a role in regulating olfactory adaptation by controlling the forgetting sensory responses to odorants such as diacetyl. The sequence is that of ALK tyrosine kinase receptor homolog scd-2 from Caenorhabditis elegans.